We begin with the raw amino-acid sequence, 575 residues long: Acetylcholine receptor subunit beta-type acr-2 (575 aa).

An N-terminal signal peptide occupies residues 1–20; it reads MKKTVKILLILITVFLKVHC. Residues 21 to 270 lie on the Extracellular side of the membrane; the sequence is NGGHDDEAAD…IRRKTLFYTV (250 aa). The interval 31-57 is disordered; sequence FLSHTNIDDPNNSSDPNKNSDQGDTMG. The segment covering 38-50 has biased composition (low complexity); it reads DDPNNSSDPNKNS. 4 N-linked (GlcNAc...) asparagine glycosylation sites follow: Asn-41, Asn-42, Asn-80, and Asn-131. A disulfide bridge connects residues Cys-185 and Cys-199. The next 3 membrane-spanning stretches (helical) occupy residues 271-291, 299-319, and 331-351; these read ILII…YLPV, LTIS…KILP, and LLLA…IVNI. The Cytoplasmic segment spans residues 352–527; that stretch reads YFRSALSHKM…WKYVAMVLDR (176 aa). Residues 528–548 form a helical membrane-spanning segment; the sequence is LILLIFFGVTLGGTLGIICSA.

Belongs to the ligand-gated ion channel (TC 1.A.9) family. Acetylcholine receptor (TC 1.A.9.1) subfamily. As to quaternary structure, component of nicotinic acetylcholine receptor. In cholinergic motoneurons, composed of 2 non-alpha subunits acr-2 and acr-3, and 3 alpha subunits unc-38, unc-63 and acr-12. As to expression, specifically expressed in cholinergic ventral cord motoneurons of the VA, VB, DA and DB classes but not AS and VC classes. Expressed in PVQ and DVC neurons in the tail.

The protein resides in the postsynaptic cell membrane. It is found in the cell membrane. Non-alpha subunit of nicotinic acetylcholine receptor (nAChR). Acts in cholinergic motoneurons to regulate presynaptic neurotransmitter release, thereby ensuring normal level of excitation of cholinergic motoneurons during locomotion. In Caenorhabditis elegans, this protein is Acetylcholine receptor subunit beta-type acr-2 (acr-2).